We begin with the raw amino-acid sequence, 381 residues long: Complement decay-accelerating factor (381 aa).

An N-terminal signal peptide occupies residues 1–34 (MTVARPSVPAALPLLGELPRLLLLVLLCLPAVWG). Sushi domains are found at residues 35-96 (DCGL…FCNR), 96-160 (RSCE…FCKK), 161-222 (KSCP…ECRE), and 223-285 (IYCP…ECRG). 2 disulfides stabilise this stretch: Cys36–Cys81 and Cys65–Cys94. A glycan (N-linked (GlcNAc...) asparagine) is linked at Asn95. Cystine bridges form between Cys98/Cys145, Cys129/Cys158, Cys163/Cys204, Cys190/Cys220, Cys225/Cys267, and Cys253/Cys283. Residues 277–354 (SGPPPECRGK…PNKGSGTTSG (78 aa)) are disordered. Residues 287–309 (SLTSKVPPTVQKPTTVNVPTTEV) are compositionally biased toward polar residues. Low complexity predominate over residues 310–328 (SPTSQKTTTKTTTPNAQAT). Ser353 carries GPI-anchor amidated serine lipidation. The propeptide at 354–381 (GTTRLLSGHTCFTLTGLLGTLVTMGLLT) is removed in mature form.

It belongs to the receptors of complement activation (RCA) family. As to quaternary structure, monomer (major form) and non-disulfide-linked, covalent homodimer (minor form). Interacts with ADGRE5. In terms of assembly, (Microbial infection) Interacts with coxsackievirus A21, coxsackieviruses B1, B3 and B5 capsid proteins. (Microbial infection) Interacts with human enterovirus 70 and D68 capsid proteins. As to quaternary structure, (Microbial infection) Interacts with human echoviruses 6, 7, 11, 12, 20 and 21 capsid proteins. Post-translationally, the Ser/Thr-rich domain is heavily O-glycosylated. In terms of tissue distribution, expressed on the plasma membranes of all cell types that are in intimate contact with plasma complement proteins. It is also found on the surfaces of epithelial cells lining extracellular compartments, and variants of the molecule are present in body fluids and in extracellular matrix.

The protein resides in the cell membrane. It localises to the secreted. Functionally, this protein recognizes C4b and C3b fragments that condense with cell-surface hydroxyl or amino groups when nascent C4b and C3b are locally generated during C4 and c3 activation. Interaction of daf with cell-associated C4b and C3b polypeptides interferes with their ability to catalyze the conversion of C2 and factor B to enzymatically active C2a and Bb and thereby prevents the formation of C4b2a and C3bBb, the amplification convertases of the complement cascade. Inhibits complement activation by destabilizing and preventing the formation of C3 and C5 convertases, which prevents complement damage. In terms of biological role, (Microbial infection) Acts as a receptor for Coxsackievirus A21, coxsackieviruses B1, B3 and B5. Its function is as follows. (Microbial infection) Acts as a receptor for Human enterovirus 70 and D68. (Microbial infection) Acts as a receptor for Human echoviruses 6, 7, 11, 12, 20 and 21. In Homo sapiens (Human), this protein is Complement decay-accelerating factor (CD55).